The following is a 291-amino-acid chain: ATP phosphoribosyltransferase 1 (291 aa).

The protein belongs to the ATP phosphoribosyltransferase family. Long subfamily. It depends on Mg(2+) as a cofactor.

Its subcellular location is the cytoplasm. It carries out the reaction 1-(5-phospho-beta-D-ribosyl)-ATP + diphosphate = 5-phospho-alpha-D-ribose 1-diphosphate + ATP. It functions in the pathway amino-acid biosynthesis; L-histidine biosynthesis; L-histidine from 5-phospho-alpha-D-ribose 1-diphosphate: step 1/9. Its activity is regulated as follows. Feedback inhibited by histidine. Catalyzes the condensation of ATP and 5-phosphoribose 1-diphosphate to form N'-(5'-phosphoribosyl)-ATP (PR-ATP). Has a crucial role in the pathway because the rate of histidine biosynthesis seems to be controlled primarily by regulation of HisG enzymatic activity. The sequence is that of ATP phosphoribosyltransferase 1 from Geobacter sulfurreducens (strain ATCC 51573 / DSM 12127 / PCA).